Reading from the N-terminus, the 445-residue chain is Glutamate-1-semialdehyde 2,1-aminomutase (445 aa).

At lysine 264 the chain carries N6-(pyridoxal phosphate)lysine.

This sequence belongs to the class-III pyridoxal-phosphate-dependent aminotransferase family. HemL subfamily. The cofactor is pyridoxal 5'-phosphate.

The protein resides in the cytoplasm. It catalyses the reaction (S)-4-amino-5-oxopentanoate = 5-aminolevulinate. It functions in the pathway porphyrin-containing compound metabolism; protoporphyrin-IX biosynthesis; 5-aminolevulinate from L-glutamyl-tRNA(Glu): step 2/2. In Halobacterium salinarum (strain ATCC 29341 / DSM 671 / R1), this protein is Glutamate-1-semialdehyde 2,1-aminomutase.